Here is a 171-residue protein sequence, read N- to C-terminus: Co-chaperone protein HscB (171 aa).

The 73-residue stretch at 2–74 (DYFTLFGLPA…LTRAEYLLSL (73 aa)) folds into the J domain.

The protein belongs to the HscB family. In terms of assembly, interacts with HscA and stimulates its ATPase activity. Interacts with IscU.

Functionally, co-chaperone involved in the maturation of iron-sulfur cluster-containing proteins. Seems to help targeting proteins to be folded toward HscA. The protein is Co-chaperone protein HscB of Salmonella typhimurium (strain LT2 / SGSC1412 / ATCC 700720).